A 117-amino-acid chain; its full sequence is UPF0102 protein Clos_1471 (117 aa).

Belongs to the UPF0102 family.

This chain is UPF0102 protein Clos_1471, found in Alkaliphilus oremlandii (strain OhILAs) (Clostridium oremlandii (strain OhILAs)).